A 151-amino-acid polypeptide reads, in one-letter code: Epigen (151 aa).

A signal peptide spans Met1–Ser18. Residues Glu19–Arg108 lie on the Extracellular side of the membrane. A glycan (N-linked (GlcNAc...) asparagine) is linked at Asn39. The 41-residue stretch at Leu54–Glu94 folds into the EGF-like domain. 3 disulfide bridges follow: Cys58–Cys71, Cys66–Cys82, and Cys84–Cys93. A helical transmembrane segment spans residues Tyr109 to Cys129. The Cytoplasmic portion of the chain corresponds to Tyr130–Leu151.

It is found in the membrane. Promotes the growth of epithelial cells. In Gallus gallus (Chicken), this protein is Epigen (EPGN).